The sequence spans 626 residues: DNA mismatch repair protein MutL (626 aa).

The tract at residues 377–413 (EEPQAVKQPTQLWQPSTKPIIEEPIQEEKSWDSNEEG) is disordered. The span at 383-393 (KQPTQLWQPST) shows a compositional bias: polar residues.

This sequence belongs to the DNA mismatch repair MutL/HexB family.

This protein is involved in the repair of mismatches in DNA. It is required for dam-dependent methyl-directed DNA mismatch repair. May act as a 'molecular matchmaker', a protein that promotes the formation of a stable complex between two or more DNA-binding proteins in an ATP-dependent manner without itself being part of a final effector complex. The chain is DNA mismatch repair protein MutL from Bacillus anthracis (strain A0248).